Reading from the N-terminus, the 239-residue chain is Uridylate kinase (239 aa).

10–13 provides a ligand contact to ATP; it reads KISG. The involved in allosteric activation by GTP stretch occupies residues 18–23; that stretch reads GESGYG. Residue G52 participates in UMP binding. 2 residues coordinate ATP: G53 and R57. Residues D72 and 133–140 each bind UMP; that span reads TGNPYFTT. T160, Y166, and D169 together coordinate ATP.

The protein belongs to the UMP kinase family. Homohexamer.

The protein localises to the cytoplasm. The enzyme catalyses UMP + ATP = UDP + ADP. It functions in the pathway pyrimidine metabolism; CTP biosynthesis via de novo pathway; UDP from UMP (UMPK route): step 1/1. With respect to regulation, allosterically activated by GTP. Inhibited by UTP. Its function is as follows. Catalyzes the reversible phosphorylation of UMP to UDP. This is Uridylate kinase from Chlorobaculum tepidum (strain ATCC 49652 / DSM 12025 / NBRC 103806 / TLS) (Chlorobium tepidum).